Reading from the N-terminus, the 158-residue chain is Small ribosomal subunit protein uS9 (158 aa).

A compositionally biased stretch (polar residues) spans 1–20 (MSETMQSLDQLSALKTTQPD). Residues 1-29 (MSETMQSLDQLSALKTTQPDAPTYTKKVD) form a disordered region.

This sequence belongs to the universal ribosomal protein uS9 family.

This chain is Small ribosomal subunit protein uS9, found in Rhodopseudomonas palustris (strain BisB5).